The primary structure comprises 578 residues: Alpha-(1,6)-fucosyltransferase (578 aa).

Over 1-9 the chain is Cytoplasmic; the sequence is MRPWTGSWR. A helical; Signal-anchor for type II membrane protein membrane pass occupies residues 10–30; sequence WIMLILFAWGTLLFYIGGHLV. Residues 31-578 lie on the Lumenal side of the membrane; that stretch reads RDNENPDHSS…KYPTYQEAEK (548 aa). 3 disulfide bridges follow: Cys-207–Cys-269, Cys-215–Cys-233, and Cys-221–Cys-225. The GT23 domain occupies 209 to 496; sequence KAKKLVCNIN…PDASAHFHSL (288 aa). The short motif at 302 to 308 is the SH3-binding element; it reads PRPPYLP. The tract at residues 368-369 is important for donor substrate binding; it reads RR. The cysteines at positions 468 and 475 are disulfide-linked. The SH3 domain occupies 505-566; sequence QNAHNQLAIY…PSYKVKEKIE (62 aa).

The protein belongs to the glycosyltransferase 23 family.

It localises to the golgi apparatus. The protein resides in the golgi stack membrane. It catalyses the reaction N(4)-{beta-D-GlcNAc-(1-&gt;2)-alpha-D-Man-(1-&gt;3)-[beta-D-GlcNAc-(1-&gt;2)-alpha-D-Man-(1-&gt;6)]-beta-D-Man-(1-&gt;4)-beta-D-GlcNAc-(1-&gt;4)-beta-D-GlcNAc}-L-asparaginyl-[protein] + GDP-beta-L-fucose = an N(4)-{beta-D-GlcNAc-(1-&gt;2)-alpha-D-Man-(1-&gt;3)-[beta-D-GlcNAc-(1-&gt;2)-alpha-D-Man-(1-&gt;6)]-beta-D-Man-(1-&gt;4)-beta-D-GlcNAc-(1-&gt;4)-[alpha-L-Fuc-(1-&gt;6)]-beta-D-GlcNAc}-L-asparaginyl-[protein] + GDP + H(+). Its pathway is protein modification; protein glycosylation. Its function is as follows. Catalyzes the addition of fucose in alpha 1-6 linkage to the first GlcNAc residue, next to the peptide chains in N-glycans. In Xenopus tropicalis (Western clawed frog), this protein is Alpha-(1,6)-fucosyltransferase (fut8).